Reading from the N-terminus, the 542-residue chain is CTP synthase (542 aa).

The amidoligase domain stretch occupies residues 1 to 265 (MTRYIFITGG…DDEVLSVFGI (265 aa)). Residue Ser13 participates in CTP binding. UTP is bound at residue Ser13. ATP is bound by residues 14 to 19 (SLGKGL) and Asp71. Residues Asp71 and Glu139 each coordinate Mg(2+). CTP-binding positions include 146–148 (DIE), 186–191 (KTKPTQ), and Lys222. UTP is bound by residues 186-191 (KTKPTQ) and Lys222. The region spanning 291–541 (TIAIVGKYTG…VEAAVEQSRL (251 aa)) is the Glutamine amidotransferase type-1 domain. Gly353 serves as a coordination point for L-glutamine. Cys380 (nucleophile; for glutamine hydrolysis) is an active-site residue. Residues 381 to 384 (FGMQ), Glu404, and Arg469 contribute to the L-glutamine site. Catalysis depends on residues His514 and Glu516.

Belongs to the CTP synthase family. As to quaternary structure, homotetramer.

It carries out the reaction UTP + L-glutamine + ATP + H2O = CTP + L-glutamate + ADP + phosphate + 2 H(+). The catalysed reaction is L-glutamine + H2O = L-glutamate + NH4(+). The enzyme catalyses UTP + NH4(+) + ATP = CTP + ADP + phosphate + 2 H(+). Its pathway is pyrimidine metabolism; CTP biosynthesis via de novo pathway; CTP from UDP: step 2/2. Allosterically activated by GTP, when glutamine is the substrate; GTP has no effect on the reaction when ammonia is the substrate. The allosteric effector GTP functions by stabilizing the protein conformation that binds the tetrahedral intermediate(s) formed during glutamine hydrolysis. Inhibited by the product CTP, via allosteric rather than competitive inhibition. Functionally, catalyzes the ATP-dependent amination of UTP to CTP with either L-glutamine or ammonia as the source of nitrogen. Regulates intracellular CTP levels through interactions with the four ribonucleotide triphosphates. The chain is CTP synthase from Parvibaculum lavamentivorans (strain DS-1 / DSM 13023 / NCIMB 13966).